A 583-amino-acid chain; its full sequence is Lamin-B3 (583 aa).

The disordered stretch occupies residues 1 to 30 (MATSTPSRAREHASAAQSPGSPTRISRMQE). Positions 2–32 (ATSTPSRAREHASAAQSPGSPTRISRMQEKE) are head. The span at 15-26 (AAQSPGSPTRIS) shows a compositional bias: polar residues. S21 carries the phosphoserine modification. The IF rod domain occupies 30-386 (EKEDLRHLND…KMLEGEEQRL (357 aa)). The tract at residues 33–67 (DLRHLNDRLAAYIERVRSLEADKSLLKIQLEEREE) is coil 1A. Residues 68–79 (VSSREVTNLRQL) form a linker 1 region. Residues 80–215 (YETELADARK…QKNIHTQEVK (136 aa)) form a coil 1B region. The interval 216 to 242 (EIKKRHDTRIVEIDSGRRVEFESKLAE) is linker 2. The interval 243–384 (ALQELRRDHE…YRKMLEGEEQ (142 aa)) is coil 2. The tract at residues 383–431 (EQRLKLSPSPSQRSTVSRASTSQTSRLLRGKKRKLDETGRSVTKRSYKV) is disordered. The interval 385-580 (RLKLSPSPSQ…QSHQSVDPSC (196 aa)) is tail. Positions 390–408 (PSPSQRSTVSRASTSQTSR) are enriched in polar residues. The residue at position 391 (S391) is a Phosphoserine. The LTD domain occupies 429–546 (YKVVQQASST…EECAERTLYR (118 aa)). Residue C580 is modified to Cysteine methyl ester. The S-farnesyl cysteine moiety is linked to residue C580. Residues 581 to 583 (SIM) constitute a propeptide, removed in mature form.

It belongs to the intermediate filament family. Post-translationally, phosphorylation plays a key role in lamin organization, subcellular localization and nuclear envelope disintegration. Phosphorylation by CDK1 at Ser-21 at the onset of mitosis drives lamin disassembly and nuclear envelope breakdown.

The protein localises to the nucleus lamina. It is found in the nucleus envelope. It localises to the nucleus. Its subcellular location is the nucleoplasm. The protein resides in the nucleus matrix. In terms of biological role, lamins are intermediate filament proteins that assemble into a filamentous meshwork, and which constitute the major components of the nuclear lamina, a fibrous layer on the nucleoplasmic side of the inner nuclear membrane. Lamins provide a framework for the nuclear envelope, bridging the nuclear envelope and chromatin, thereby playing an important role in nuclear assembly, chromatin organization, nuclear membrane and telomere dynamics. The structural integrity of the lamina is strictly controlled by the cell cycle, as seen by the disintegration and formation of the nuclear envelope in prophase and telophase, respectively. In Xenopus laevis (African clawed frog), this protein is Lamin-B3 (lmnb3.L).